A 112-amino-acid polypeptide reads, in one-letter code: Protein BEX5 (112 aa).

Composition is skewed to basic and acidic residues over residues 1-12 and 30-51; these read MEKDPKERREEE and PKPR…REDM. Residues 1 to 56 are disordered; it reads MEKDPKERREEEQAPVQNEEACPMGGGEGPKPRENVRGDWDPPAQDFREDMPNGLV. Positions 101–105 are his cluster; it reads HHDHH. Position 109 (C109) interacts with Zn(2+).

Belongs to the BEX family. Ubiquitinated. Degraded by the proteasome.

It localises to the cytoplasm. The protein is Protein BEX5 (BEX5) of Bos taurus (Bovine).